The following is a 263-amino-acid chain: Tryptophan synthase alpha chain (263 aa).

Active-site proton acceptor residues include E49 and D60.

Belongs to the TrpA family. In terms of assembly, tetramer of two alpha and two beta chains.

It catalyses the reaction (1S,2R)-1-C-(indol-3-yl)glycerol 3-phosphate + L-serine = D-glyceraldehyde 3-phosphate + L-tryptophan + H2O. The protein operates within amino-acid biosynthesis; L-tryptophan biosynthesis; L-tryptophan from chorismate: step 5/5. The alpha subunit is responsible for the aldol cleavage of indoleglycerol phosphate to indole and glyceraldehyde 3-phosphate. The polypeptide is Tryptophan synthase alpha chain (Cereibacter sphaeroides (strain KD131 / KCTC 12085) (Rhodobacter sphaeroides)).